A 138-amino-acid chain; its full sequence is Gonadotropin subunit beta-2 (138 aa).

The first 21 residues, 1-21 (MPASSYFLLFFFMNFFSPAQS), serve as a signal peptide directing secretion. Intrachain disulfides connect Cys-27–Cys-75, Cys-41–Cys-90, Cys-44–Cys-128, Cys-52–Cys-106, Cys-56–Cys-108, and Cys-111–Cys-118. Asn-31 carries an N-linked (GlcNAc...) asparagine glycan.

This sequence belongs to the glycoprotein hormones subunit beta family. As to quaternary structure, heterodimer of an alpha and a beta chain.

Its subcellular location is the secreted. Involved in gametogenesis and steroidogenesis. The sequence is that of Gonadotropin subunit beta-2 (cgbb) from Clarias gariepinus (North African catfish).